Here is a 583-residue protein sequence, read N- to C-terminus: NudC domain-containing protein 1 (583 aa).

A Phosphoserine modification is found at serine 8. One can recognise a CS domain in the interval 273 to 361 (IKEPLYYWQQ…NEGLTWPELV (89 aa)). Phosphoserine is present on serine 388.

Isoform 1 is specifically expressed in leukemias and a variety of solid tumor cell lines and is also detected in testis and heart. Isoform 2 is predominantly expressed in testis and weakly expressed in tumor cells.

The protein localises to the cytoplasm. It localises to the nucleus. This is NudC domain-containing protein 1 from Homo sapiens (Human).